The chain runs to 727 residues: Putative E3 ubiquitin-protein ligase UNKL (727 aa).

The interval 1-21 (MPSVSKAAAAALSGSPPQTEK) is disordered. 4 consecutive C3H1-type zinc fingers follow at residues 75 to 104 (YSPD…HRTT), 115 to 145 (YYKT…HGPL), 243 to 277 (QYRS…HSRT), and 285 to 313 (IYKS…HTEK). Residues 330-339 (STSAYSSQPG) are compositionally biased toward polar residues. Disordered regions lie at residues 330–360 (STSA…DSKQ), 446–514 (LTGP…ATLG), and 543–562 (SPSP…SPNS). Low complexity predominate over residues 463–495 (SLPRSPSLHSSSSLSTSPLSSLSQSLSGPLVSS). The RING-type zinc-finger motif lies at 686-721 (CVACQERAHGTVLRPCQHRVLCEPCAASTPECPYCK).

It belongs to the unkempt family. Interacts with the GTP-bound form of Rac1. Interacts with Baf60b/Smarcd2. In terms of processing, ubiquitination is enhanced by activated Rac1. The presence of the RING finger domain is not essential for ubiquitination to occur. As to expression, ubiquitous.

The protein localises to the cytoplasm. It is found in the nucleus. It participates in protein modification; protein ubiquitination. In terms of biological role, may participate in a protein complex showing an E3 ligase activity regulated by Rac1. Ubiquitination is directed towards itself and possibly other substrates, such as Baf60b/Smarcd2. Intrinsic E3 ligase activity has not been proven. The polypeptide is Putative E3 ubiquitin-protein ligase UNKL (Unkl) (Mus musculus (Mouse)).